The sequence spans 214 residues: Rho-related GTP-binding protein RhoJ (214 aa).

S-palmitoyl cysteine attachment occurs at residues Cys-3 and Cys-11. Residues 31–36 (AVGKTC), 46–53 (FPEEYVPT), 75–79 (DTAGQ), 133–136 (TQID), and 177–178 (AL) each bind GTP. The short motif at 50 to 58 (YVPTVFDHY) is the Effector region element. Cys-211 carries the cysteine methyl ester modification. Residue Cys-211 is the site of S-farnesyl cysteine attachment. A propeptide spans 212–214 (AII) (removed in mature form).

It belongs to the small GTPase superfamily. Rho family. As to quaternary structure, interacts with the CRIB domains of proteins such as Pak1 and Was/Wasp. Interacts with GLUL. Post-translationally, palmitoylated; regulates localization to the plasma membrane and may be mediated by GLUL. In terms of tissue distribution, highly expressed in heart with moderate levels in lung and liver. Very low levels detected in brain, spleen, skeletal muscle, kidney and testis.

The protein resides in the cell membrane. In terms of biological role, plasma membrane-associated small GTPase specifically involved in angiogenesis. Required for endothelial cell migration during vascular development via its interaction with GLUL. Elicits the formation of F-actin-rich structures, thereby regulating endothelial cell migration. This chain is Rho-related GTP-binding protein RhoJ (Rhoj), found in Mus musculus (Mouse).